We begin with the raw amino-acid sequence, 357 residues long: Peptide chain release factor 1 (357 aa).

N5-methylglutamine is present on Gln234.

Belongs to the prokaryotic/mitochondrial release factor family. In terms of processing, methylated by PrmC. Methylation increases the termination efficiency of RF1.

It is found in the cytoplasm. Peptide chain release factor 1 directs the termination of translation in response to the peptide chain termination codons UAG and UAA. In Arthrobacter sp. (strain FB24), this protein is Peptide chain release factor 1.